Consider the following 241-residue polypeptide: Pyridoxine/pyridoxamine 5'-phosphate oxidase (241 aa).

The disordered stretch occupies residues 1-35 (MASNPPSAASPRRTAVSPGADRPDGPDPAGQRQSY). Substrate is bound by residues 32–35 (RQSY) and Lys92. Residues 87–92 (RTVLLK), 102–103 (YT), Arg108, Lys109, and Gln131 each bind FMN. Tyr149, Arg153, and Ser157 together coordinate substrate. FMN-binding positions include 166–167 (QS) and Trp212. Residue 218-220 (RLH) participates in substrate binding. Residue Arg222 coordinates FMN.

The protein belongs to the pyridoxamine 5'-phosphate oxidase family. In terms of assembly, homodimer. FMN serves as cofactor.

It carries out the reaction pyridoxamine 5'-phosphate + O2 + H2O = pyridoxal 5'-phosphate + H2O2 + NH4(+). The enzyme catalyses pyridoxine 5'-phosphate + O2 = pyridoxal 5'-phosphate + H2O2. It functions in the pathway cofactor metabolism; pyridoxal 5'-phosphate salvage; pyridoxal 5'-phosphate from pyridoxamine 5'-phosphate: step 1/1. Its pathway is cofactor metabolism; pyridoxal 5'-phosphate salvage; pyridoxal 5'-phosphate from pyridoxine 5'-phosphate: step 1/1. In terms of biological role, catalyzes the oxidation of either pyridoxine 5'-phosphate (PNP) or pyridoxamine 5'-phosphate (PMP) into pyridoxal 5'-phosphate (PLP). This chain is Pyridoxine/pyridoxamine 5'-phosphate oxidase, found in Frankia alni (strain DSM 45986 / CECT 9034 / ACN14a).